Consider the following 651-residue polypeptide: Peptidoglycan D,D-transpeptidase MrdA (651 aa).

The helical transmembrane segment at 30 to 50 (LVAFLGILLLTGVLFTNIYQL) threads the bilayer. Catalysis depends on S338, which acts as the Acyl-ester intermediate.

Belongs to the transpeptidase family. MrdA subfamily.

The protein localises to the cell inner membrane. The enzyme catalyses Preferential cleavage: (Ac)2-L-Lys-D-Ala-|-D-Ala. Also transpeptidation of peptidyl-alanyl moieties that are N-acyl substituents of D-alanine.. The protein operates within cell wall biogenesis; peptidoglycan biosynthesis. In terms of biological role, catalyzes cross-linking of the peptidoglycan cell wall. This Haemophilus influenzae (strain ATCC 51907 / DSM 11121 / KW20 / Rd) protein is Peptidoglycan D,D-transpeptidase MrdA.